Reading from the N-terminus, the 552-residue chain is Steroid transmembrane transporter SLC22A24 (552 aa).

Helical transmembrane passes span 16 to 36 (FQIC…PNIV), 146 to 166 (SMVQ…YGHL), 178 to 200 (LCFL…LVYC), 204 to 226 (FLAG…EWTL), 234 to 254 (IMVL…LAFA), 260 to 280 (ILQL…WKMV), 350 to 370 (VFGL…LILN), 380 to 400 (LFQI…LLTL), 407 to 427 (ISQI…TFLP), 435 to 455 (VVLA…ASVH), 474 to 492 (VSGR…LMAY), and 496 to 516 (LPWI…LLLP).

This sequence belongs to the major facilitator (TC 2.A.1) superfamily. Organic cation transporter (TC 2.A.1.19) family. As to expression, localized to the kidney. Highly specific expression pattern in the nephron, localized to segment 3 of the proximal tubule.

Its subcellular location is the cell membrane. The catalysed reaction is estrone 3-sulfate(out) + glutarate(in) = estrone 3-sulfate(in) + glutarate(out). The enzyme catalyses 17beta-estradiol 17-O-(beta-D-glucuronate)(out) + glutarate(in) = 17beta-estradiol 17-O-(beta-D-glucuronate)(in) + glutarate(out). It catalyses the reaction taurocholate(out) + glutarate(in) = taurocholate(in) + glutarate(out). It carries out the reaction 5alpha-androstane-3alpha,17beta-diol 3-O-(beta-D-glucuronate)(out) + glutarate(in) = 5alpha-androstane-3alpha,17beta-diol 3-O-(beta-D-glucuronate)(in) + glutarate(out). The catalysed reaction is glycocholate(out) + glutarate(in) = glycocholate(in) + glutarate(out). The enzyme catalyses dehydroepiandrosterone 3-sulfate(out) + glutarate(in) = dehydroepiandrosterone 3-sulfate(in) + glutarate(out). It catalyses the reaction glutarate(in) + succinate(out) = glutarate(out) + succinate(in). With respect to regulation, transport is chloride sensitive and transtimulated by glutaric acid. Transport is inhibited by anionic compounds from different chemical classes. In terms of biological role, renal transmembrane organic anion/dicarboxylate exchanger that participates in the reabsorption of conjugated steroids including estradiol-17beta-D-glucuronide (or 17beta-estradiol 17-O-(beta-D-glucuronate)), androstanediol glucuronide (or 5alpha-androstane-3alpha,17beta-diol 3-O-(beta-D-glucuronate)), and estrone 3-sulfate, as well as bile acids taurocholate and glycocholate, driven by an outward gradient of dicarboxylates such as glutarate or succinate. Similar uptake function as Isoform 1. Functionally, lack of transporter activity. The protein is Steroid transmembrane transporter SLC22A24 of Homo sapiens (Human).